Consider the following 842-residue polypeptide: Protein P (842 aa).

The interval 1-177 (MPLSYQHFRR…FCGSPYTWEQ (177 aa)) is terminal protein domain (TP). Residues 178 to 345 (DLQHGAFLDG…YCLSHLVNLL (168 aa)) form a spacer region. The disordered stretch occupies residues 184–238 (FLDGPSRVGKEPFRQQSSRIPSRSPVGPSIQSKYQQSRLGLQSQKGPLARGQQGR). Positions 197–208 (RQQSSRIPSRSP) are enriched in low complexity. Positions 212 to 228 (SIQSKYQQSRLGLQSQK) are enriched in polar residues. The tract at residues 346–689 (QDWGPCTEHG…YMNLYPVARQ (344 aa)) is polymerase/reverse transcriptase domain (RT). A Reverse transcriptase domain is found at 356 to 599 (EHHIRIPRTP…YSLNFMGYVI (244 aa)). Residues D428, D550, and D551 each coordinate Mg(2+).

Belongs to the hepadnaviridae P protein family.

The catalysed reaction is DNA(n) + a 2'-deoxyribonucleoside 5'-triphosphate = DNA(n+1) + diphosphate. The enzyme catalyses Endonucleolytic cleavage to 5'-phosphomonoester.. Its activity is regulated as follows. Activated by host HSP70 and HSP40 in vitro to be able to bind the epsilon loop of the pgRNA. Because deletion of the RNase H region renders the protein partly chaperone-independent, the chaperones may be needed indirectly to relieve occlusion of the RNA-binding site by this domain. Inhibited by several reverse-transcriptase inhibitors: Lamivudine, Adefovir and Entecavir. Functionally, multifunctional enzyme that converts the viral RNA genome into dsDNA in viral cytoplasmic capsids. This enzyme displays a DNA polymerase activity that can copy either DNA or RNA templates, and a ribonuclease H (RNase H) activity that cleaves the RNA strand of RNA-DNA heteroduplexes in a partially processive 3'- to 5'-endonucleasic mode. Neo-synthesized pregenomic RNA (pgRNA) are encapsidated together with the P protein, and reverse-transcribed inside the nucleocapsid. Initiation of reverse-transcription occurs first by binding the epsilon loop on the pgRNA genome, and is initiated by protein priming, thereby the 5'-end of (-)DNA is covalently linked to P protein. Partial (+)DNA is synthesized from the (-)DNA template and generates the relaxed circular DNA (RC-DNA) genome. After budding and infection, the RC-DNA migrates in the nucleus, and is converted into a plasmid-like covalently closed circular DNA (cccDNA). The activity of P protein does not seem to be necessary for cccDNA generation, and is presumably released from (+)DNA by host nuclear DNA repair machinery. This Hepatitis B virus genotype G (isolate IG29227/2000) (HBV-G) protein is Protein P.